The chain runs to 238 residues: Riboflavin-binding protein (238 aa).

Positions Met1–Cys17 are cleaved as a signal peptide. Cystine bridges form between Cys22–Cys49, Cys41–Cys90, Cys50–Cys94, Cys74–Cys155, Cys81–Cys127, Cys116–Cys186, Cys120–Cys169, Cys133–Cys151, and Cys184–Cys219. N-linked (GlcNAc...) asparagine glycosylation is found at Asn53, Asn67, and Asn105. A glycan (N-linked (GlcNAc...) asparagine) is linked at Asn164. Residues Ser204, Ser205, Ser208, Ser209, Ser210, Ser212, Ser213, and Ser214 each carry the phosphoserine modification.

The protein belongs to the folate receptor family. Post-translationally, N-glycosylated. In terms of tissue distribution, expressed in egg yolk and egg white (at protein level).

Functionally, required for the transport of riboflavin to the developing oocyte. This is Riboflavin-binding protein from Dromaius novaehollandiae (Emu).